Consider the following 345-residue polypeptide: MSIANIDALTRVIDHREIFHDEMLALMRRIMSGEMSPVMIAAFAIGLRVKKETIGEIAAAAQVMREFATPVAVPDKTNLVDLCGTGGDGVHTFNISTASMFVAAAAGARVAKHGGRSVSSSSGSADVLEALGAHINLTPEQVAISLERCGIGFMFAPNHHASMKHAAPVRKELGVRTIFNILGPLTNPALAPNQVMGVFHPDLVGIQVRVLQRLGSSHVLIVHGMNGMDEISLSGETMIGELKAGQISEYVVHPADFGLPVYDTRVLKVANKEESVTCIQRALANEDGPVRDIVLLNAGAALYAADVVTSITDGVRAAREAVASGQALAKLSQYVAVTQSFKTAV.

5-phospho-alpha-D-ribose 1-diphosphate-binding positions include glycine 84, 87-88 (GD), threonine 92, 94-97 (NIST), 112-120 (KHGGRSVSS), and serine 124. Glycine 84 contributes to the anthranilate binding site. Position 96 (serine 96) interacts with Mg(2+). Arginine 170 lines the anthranilate pocket. 2 residues coordinate Mg(2+): aspartate 229 and glutamate 230.

Belongs to the anthranilate phosphoribosyltransferase family. Homodimer. The cofactor is Mg(2+).

It carries out the reaction N-(5-phospho-beta-D-ribosyl)anthranilate + diphosphate = 5-phospho-alpha-D-ribose 1-diphosphate + anthranilate. It functions in the pathway amino-acid biosynthesis; L-tryptophan biosynthesis; L-tryptophan from chorismate: step 2/5. Functionally, catalyzes the transfer of the phosphoribosyl group of 5-phosphorylribose-1-pyrophosphate (PRPP) to anthranilate to yield N-(5'-phosphoribosyl)-anthranilate (PRA). This is Anthranilate phosphoribosyltransferase from Leptothrix cholodnii (strain ATCC 51168 / LMG 8142 / SP-6) (Leptothrix discophora (strain SP-6)).